The following is a 367-amino-acid chain: Probable butyrate kinase (367 aa).

Belongs to the acetokinase family.

Its subcellular location is the cytoplasm. The enzyme catalyses butanoate + ATP = butanoyl phosphate + ADP. This is Probable butyrate kinase from Exiguobacterium sibiricum (strain DSM 17290 / CCUG 55495 / CIP 109462 / JCM 13490 / 255-15).